The chain runs to 126 residues: Holo-[acyl-carrier-protein] synthase (126 aa).

Aspartate 9 and glutamate 58 together coordinate Mg(2+).

The protein belongs to the P-Pant transferase superfamily. AcpS family. Requires Mg(2+) as cofactor.

Its subcellular location is the cytoplasm. The enzyme catalyses apo-[ACP] + CoA = holo-[ACP] + adenosine 3',5'-bisphosphate + H(+). Transfers the 4'-phosphopantetheine moiety from coenzyme A to a Ser of acyl-carrier-protein. The chain is Holo-[acyl-carrier-protein] synthase from Cronobacter sakazakii (strain ATCC BAA-894) (Enterobacter sakazakii).